Here is a 406-residue protein sequence, read N- to C-terminus: F-box/WD repeat-containing protein mec-15 (406 aa).

An F-box domain is found at 6–53; that stretch reads PTELISLPSELLCHLFTYLPQRQLITEIPLVCRRFNTILNDDKFWSRR. 5 WD repeats span residues 101–142, 156–195, 242–279, 281–320, and 365–406; these read GHSA…NGED, AHSG…ALQN, LHKR…KPVL, EYSP…VLQT, and SHEL…DQEN.

As to quaternary structure, may interact with the SCF ubiquitin ligase complex component skr-1. Expressed in several neurons in the head, tail and ventral cord, but absent in touch receptor neurons in adults. Expressed in GABAergic and cholinergic motor neurons.

It is found in the perikaryon. In terms of biological role, plays a role in mechanosensory transduction (touch sensitivity), touch receptor neuron development and synapse formation. Regulates expression of the protein snb-1 and the distribution of synaptic vesicles at synapses to promote synaptic transmission at the neuromuscular junctions of GABAergic motor neurons. The protein is F-box/WD repeat-containing protein mec-15 of Caenorhabditis elegans.